Here is a 204-residue protein sequence, read N- to C-terminus: uncharacterized protein (204 aa).

Functionally, possibly involved in pGI2 replication mechanism. This is an uncharacterized protein from Bacillus thuringiensis.